Here is a 318-residue protein sequence, read N- to C-terminus: Holliday junction branch migration complex subunit RuvB (318 aa).

The large ATPase domain (RuvB-L) stretch occupies residues 1–168 (MPENLEIRPS…FGYVAKIVDY (168 aa)). I7, R8, G49, K52, T53, T54, R158, Y168, and R205 together coordinate ATP. T53 contacts Mg(2+). Positions 169–239 (TLEDMIQIIR…IVNKTFDSIG (71 aa)) are small ATPAse domain (RuvB-S). The interval 242-318 (NQGLSQINIE…RDYLLELKTN (77 aa)) is head domain (RuvB-H). DNA is bound by residues R278, K297, and R302.

This sequence belongs to the RuvB family. In terms of assembly, homohexamer. Forms an RuvA(8)-RuvB(12)-Holliday junction (HJ) complex. HJ DNA is sandwiched between 2 RuvA tetramers; dsDNA enters through RuvA and exits via RuvB. An RuvB hexamer assembles on each DNA strand where it exits the tetramer. Each RuvB hexamer is contacted by two RuvA subunits (via domain III) on 2 adjacent RuvB subunits; this complex drives branch migration. In the full resolvosome a probable DNA-RuvA(4)-RuvB(12)-RuvC(2) complex forms which resolves the HJ.

Its subcellular location is the cytoplasm. It carries out the reaction ATP + H2O = ADP + phosphate + H(+). Functionally, the RuvA-RuvB-RuvC complex processes Holliday junction (HJ) DNA during genetic recombination and DNA repair, while the RuvA-RuvB complex plays an important role in the rescue of blocked DNA replication forks via replication fork reversal (RFR). RuvA specifically binds to HJ cruciform DNA, conferring on it an open structure. The RuvB hexamer acts as an ATP-dependent pump, pulling dsDNA into and through the RuvAB complex. RuvB forms 2 homohexamers on either side of HJ DNA bound by 1 or 2 RuvA tetramers; 4 subunits per hexamer contact DNA at a time. Coordinated motions by a converter formed by DNA-disengaged RuvB subunits stimulates ATP hydrolysis and nucleotide exchange. Immobilization of the converter enables RuvB to convert the ATP-contained energy into a lever motion, pulling 2 nucleotides of DNA out of the RuvA tetramer per ATP hydrolyzed, thus driving DNA branch migration. The RuvB motors rotate together with the DNA substrate, which together with the progressing nucleotide cycle form the mechanistic basis for DNA recombination by continuous HJ branch migration. Branch migration allows RuvC to scan DNA until it finds its consensus sequence, where it cleaves and resolves cruciform DNA. The sequence is that of Holliday junction branch migration complex subunit RuvB from Mesomycoplasma hyopneumoniae (strain 232) (Mycoplasma hyopneumoniae).